A 136-amino-acid polypeptide reads, in one-letter code: Histone H3 (136 aa).

Residues 1 to 43 (MARTKQTARKSTGGKAPRKQLASKAARKAAPSTGGVKKPHRYK) are disordered. An N6,N6,N6-trimethyllysine; alternate modification is found at Lys-5. Position 5 is an N6,N6-dimethyllysine; alternate (Lys-5). An N6-methyllysine; alternate mark is found at Lys-5 and Lys-10. Lys-10 is subject to N6-acetyllysine; alternate. The residue at position 11 (Ser-11) is a Phosphoserine. Lys-15 carries the N6,N6-dimethyllysine; alternate modification. An N6-acetyllysine; alternate mark is found at Lys-15, Lys-19, Lys-24, Lys-28, and Lys-37. Residues Lys-19, Lys-24, Lys-28, and Lys-37 each carry the N6-methyllysine; alternate modification. N6,N6,N6-trimethyllysine; alternate occurs at positions 28 and 37. Residues Lys-28 and Lys-37 each carry the N6,N6-dimethyllysine; alternate modification. N6-acetyllysine is present on residues Lys-57 and Lys-65. The residue at position 80 (Lys-80) is an N6,N6,N6-trimethyllysine; alternate. Lys-80 carries the post-translational modification N6,N6-dimethyllysine; alternate. Lys-80 is subject to N6-methyllysine; alternate.

Belongs to the histone H3 family. In terms of assembly, the nucleosome is a histone octamer containing two molecules each of H2A, H2B, H3 and H4 assembled in one H3-H4 heterotetramer and two H2A-H2B heterodimers. The octamer wraps approximately 147 bp of DNA. In terms of processing, phosphorylated to form H3S10ph. H3S10ph promotes subsequent H3K14ac formation and is required for transcriptional activation through TBP recruitment to the promoters. Mono-, di- and trimethylated by the COMPASS complex to form H3K4me1/2/3. H3K4me activates gene expression by regulating transcription elongation and plays a role in telomere length maintenance. H3K4me enrichment correlates with transcription levels, and occurs in a 5' to 3' gradient with H3K4me3 enrichment at the 5'-end of genes, shifting to H3K4me2 and then H3K4me1. Methylated by set2 to form H3K36me. H3K36me represses gene expression. Methylated by dot1 to form H3K79me. H3K79me is required for association of SIR proteins with telomeric regions and for telomeric silencing. The COMPASS-mediated formation of H3K4me2/3 and the dot1-mediated formation of H3K79me require H2BK123ub1. Post-translationally, acetylation of histone H3 leads to transcriptional activation. H3K14ac formation by gcn5 is promoted by H3S10ph. H3K14ac can also be formed by esa1. H3K56ac formation occurs predominantly in newly synthesized H3 molecules during G1, S and G2/M of the cell cycle and may be involved in DNA repair.

It is found in the nucleus. It localises to the chromosome. Its function is as follows. Core component of nucleosome. Nucleosomes wrap and compact DNA into chromatin, limiting DNA accessibility to the cellular machineries which require DNA as a template. Histones thereby play a central role in transcription regulation, DNA repair, DNA replication and chromosomal stability. DNA accessibility is regulated via a complex set of post-translational modifications of histones, also called histone code, and nucleosome remodeling. This chain is Histone H3 (hht1), found in Neosartorya fischeri (strain ATCC 1020 / DSM 3700 / CBS 544.65 / FGSC A1164 / JCM 1740 / NRRL 181 / WB 181) (Aspergillus fischerianus).